Here is a 312-residue protein sequence, read N- to C-terminus: Porphobilinogen deaminase (312 aa).

Position 241 is an S-(dipyrrolylmethanemethyl)cysteine (Cys-241).

Belongs to the HMBS family. As to quaternary structure, monomer. The cofactor is dipyrromethane.

The catalysed reaction is 4 porphobilinogen + H2O = hydroxymethylbilane + 4 NH4(+). It functions in the pathway porphyrin-containing compound metabolism; protoporphyrin-IX biosynthesis; coproporphyrinogen-III from 5-aminolevulinate: step 2/4. Functionally, tetrapolymerization of the monopyrrole PBG into the hydroxymethylbilane pre-uroporphyrinogen in several discrete steps. This chain is Porphobilinogen deaminase, found in Pelotomaculum thermopropionicum (strain DSM 13744 / JCM 10971 / SI).